A 390-amino-acid chain; its full sequence is MKTELTVKLHEWEQKAQKRQLRRAEASGATVILNGKPMLNLASNNYLGLADDRRLIEAGCEAMRAYGAGAGASRLVVGNHPLYERAEAALKQWKKAEAALIFNSGYTANIGVLTALIGRDDLVFSDKLNHASLIDGIRLSKAACFRYRHHDIDQLESLLKQSPPAKRKWIVTDAVFSMDGDMAPLEELVELKRRYRAVLLVDEAHSGGVFGPNGEGLLHHFGLEKEEDVIAIGTFSKALGSFGAYVTGEPWLVDYLINSARSLIFTTALPPSVLAANEAAIHIVQAEPKRRERLHALSERFRTKLKRLGFDTGGSETPIVPVIVGPNDRAVAMSEQLQEAGIAAVAIRPPTVPEGTARIRFSITAAMTEEDIDMAVDCIALAGKRIGLIS.

A substrate-binding site is contributed by Arg-19. Position 105–106 (105–106 (GY)) interacts with pyridoxal 5'-phosphate. Residue His-130 coordinates substrate. Pyridoxal 5'-phosphate-binding positions include Ser-177, 202–205 (DEAH), and 234–237 (TFSK). Lys-237 is subject to N6-(pyridoxal phosphate)lysine. Thr-351 contributes to the substrate binding site.

Belongs to the class-II pyridoxal-phosphate-dependent aminotransferase family. BioF subfamily. In terms of assembly, homodimer. Pyridoxal 5'-phosphate serves as cofactor.

It carries out the reaction 6-carboxyhexanoyl-[ACP] + L-alanine + H(+) = (8S)-8-amino-7-oxononanoate + holo-[ACP] + CO2. It participates in cofactor biosynthesis; biotin biosynthesis. Its function is as follows. Catalyzes the decarboxylative condensation of pimeloyl-[acyl-carrier protein] and L-alanine to produce 8-amino-7-oxononanoate (AON), [acyl-carrier protein], and carbon dioxide. In Geobacillus kaustophilus (strain HTA426), this protein is Putative 8-amino-7-oxononanoate synthase (bioF).